Here is a 348-residue protein sequence, read N- to C-terminus: Anthranilate phosphoribosyltransferase (348 aa).

Residues glycine 87, 90–91, threonine 95, 97–100, 115–123, and serine 127 each bind 5-phospho-alpha-D-ribose 1-diphosphate; these read GD, NIST, and KHGNRSASG. Glycine 87 serves as a coordination point for anthranilate. Serine 99 serves as a coordination point for Mg(2+). Residue asparagine 118 participates in anthranilate binding. Arginine 173 provides a ligand contact to anthranilate. The Mg(2+) site is built by aspartate 232 and glutamate 233.

This sequence belongs to the anthranilate phosphoribosyltransferase family. In terms of assembly, homodimer. Requires Mg(2+) as cofactor.

It carries out the reaction N-(5-phospho-beta-D-ribosyl)anthranilate + diphosphate = 5-phospho-alpha-D-ribose 1-diphosphate + anthranilate. Its pathway is amino-acid biosynthesis; L-tryptophan biosynthesis; L-tryptophan from chorismate: step 2/5. Catalyzes the transfer of the phosphoribosyl group of 5-phosphorylribose-1-pyrophosphate (PRPP) to anthranilate to yield N-(5'-phosphoribosyl)-anthranilate (PRA). The chain is Anthranilate phosphoribosyltransferase from Synechococcus sp. (strain CC9311).